The following is a 383-amino-acid chain: Succinyl-diaminopimelate desuccinylase (383 aa).

Histidine 69 contributes to the Zn(2+) binding site. Aspartate 71 is an active-site residue. Aspartate 103 serves as a coordination point for Zn(2+). Glutamate 137 functions as the Proton acceptor in the catalytic mechanism. Zn(2+) contacts are provided by glutamate 138, glutamate 166, and histidine 357.

The protein belongs to the peptidase M20A family. DapE subfamily. In terms of assembly, homodimer. Requires Zn(2+) as cofactor. The cofactor is Co(2+).

The catalysed reaction is N-succinyl-(2S,6S)-2,6-diaminopimelate + H2O = (2S,6S)-2,6-diaminopimelate + succinate. The protein operates within amino-acid biosynthesis; L-lysine biosynthesis via DAP pathway; LL-2,6-diaminopimelate from (S)-tetrahydrodipicolinate (succinylase route): step 3/3. Catalyzes the hydrolysis of N-succinyl-L,L-diaminopimelic acid (SDAP), forming succinate and LL-2,6-diaminopimelate (DAP), an intermediate involved in the bacterial biosynthesis of lysine and meso-diaminopimelic acid, an essential component of bacterial cell walls. The chain is Succinyl-diaminopimelate desuccinylase from Rickettsia typhi (strain ATCC VR-144 / Wilmington).